Reading from the N-terminus, the 362-residue chain is Bifunctional nitrilase/nitrile hydratase NIT4 (362 aa).

A CN hydrolase domain is found at 31–307; it reads VRATVVQAST…EALITADLDL (277 aa). Residue E71 is the Proton acceptor of the active site. K162 serves as the catalytic Proton donor. The active-site Nucleophile is the C196.

Belongs to the carbon-nitrogen hydrolase superfamily. Nitrilase family.

It catalyses the reaction a nitrile + 2 H2O = a carboxylate + NH4(+). It carries out the reaction 3-cyano-L-alanine + 2 H2O = L-aspartate + NH4(+). Its function is as follows. Highly specific for beta-cyano-L-alanine (Ala(CN)). Low activity with 3-phenylpropionitrile (PPN). Not associated with auxin production but may be involved in cyanide detoxification. The sequence is that of Bifunctional nitrilase/nitrile hydratase NIT4 (NIT4) from Oryza sativa subsp. japonica (Rice).